Reading from the N-terminus, the 785-residue chain is Rho-GTPase-activating protein RGD3 (785 aa).

Ser2 carries the N-acetylserine modification. Residues Ile31–Arg463 form the F-BAR domain. The tract at residues Ser313–Asn340 is disordered. Positions Thr329–Ser339 are enriched in basic and acidic residues. The 183-residue stretch at Ile520 to Glu702 folds into the Rho-GAP domain. The tract at residues Thr732–Thr785 is disordered. Ser759 carries the phosphoserine modification. Residues Thr760, Thr762, and Thr763 each carry the phosphothreonine modification.

In terms of processing, phosphorylation at the C-terminus negatively regulates the activity and the polarized localization.

The protein resides in the cytoplasmic vesicle membrane. The protein localises to the cell membrane. Its subcellular location is the bud tip. It localises to the bud neck. Its function is as follows. GTPase activating protein (GAP) for RHO3 and CDC42 that binds membranes through phosphatidylinositol 4,5-bisphosphate. Plays a key role in cell polarity. Modulates the RHO3 distribution at the plasma membrane and its polarity during growth. This chain is Rho-GTPase-activating protein RGD3, found in Saccharomyces cerevisiae (strain ATCC 204508 / S288c) (Baker's yeast).